Reading from the N-terminus, the 131-residue chain is Large ribosomal subunit protein bL17 (131 aa).

The protein belongs to the bacterial ribosomal protein bL17 family. As to quaternary structure, part of the 50S ribosomal subunit. Contacts protein L32.

In Cupriavidus pinatubonensis (strain JMP 134 / LMG 1197) (Cupriavidus necator (strain JMP 134)), this protein is Large ribosomal subunit protein bL17.